A 305-amino-acid chain; its full sequence is UDP-N-acetylenolpyruvoylglucosamine reductase 2 (305 aa).

One can recognise an FAD-binding PCMH-type domain in the interval 33–197; that stretch reads VGGKADVFVA…LEARFELEEG (165 aa). R176 is a catalytic residue. Catalysis depends on S226, which acts as the Proton donor. The active site involves E296.

Belongs to the MurB family. FAD serves as cofactor.

Its subcellular location is the cytoplasm. The catalysed reaction is UDP-N-acetyl-alpha-D-muramate + NADP(+) = UDP-N-acetyl-3-O-(1-carboxyvinyl)-alpha-D-glucosamine + NADPH + H(+). It functions in the pathway cell wall biogenesis; peptidoglycan biosynthesis. Functionally, cell wall formation. The polypeptide is UDP-N-acetylenolpyruvoylglucosamine reductase 2 (murB2) (Bacillus cereus (strain ATCC 14579 / DSM 31 / CCUG 7414 / JCM 2152 / NBRC 15305 / NCIMB 9373 / NCTC 2599 / NRRL B-3711)).